Reading from the N-terminus, the 335-residue chain is [Citrate [pro-3S]-lyase] ligase (335 aa).

Residues 1 to 131 (MQFERISTEQ…SATRLQKQCS (131 aa)) enclose the N-acetyltransferase domain.

It catalyses the reaction holo-[citrate lyase ACP] + acetate + ATP = acetyl-[citrate lyase ACP] + AMP + diphosphate. Functionally, acetylation of prosthetic group (2-(5''-phosphoribosyl)-3'-dephosphocoenzyme-A) of the gamma subunit of citrate lyase. This Haemophilus influenzae (strain ATCC 51907 / DSM 11121 / KW20 / Rd) protein is [Citrate [pro-3S]-lyase] ligase (citC).